The sequence spans 379 residues: Cytochrome b (379 aa).

4 helical membrane-spanning segments follow: residues 33-53 (FGSL…FLDM), 77-98 (WLIR…YLHI), 113-133 (WNIG…GYVL), and 178-198 (FFAF…VHLL). Positions 83 and 97 each coordinate heme b. The heme b site is built by His-182 and His-196. His-201 is a binding site for a ubiquinone. 4 consecutive transmembrane segments (helical) span residues 226–246 (TKDF…VPFF), 288–308 (LGGV…PHIQ), 320–340 (ISQF…WIGG), and 347–367 (FIII…VLMP).

Belongs to the cytochrome b family. As to quaternary structure, the cytochrome bc1 complex contains 11 subunits: 3 respiratory subunits (MT-CYB, CYC1 and UQCRFS1), 2 core proteins (UQCRC1 and UQCRC2) and 6 low-molecular weight proteins (UQCRH/QCR6, UQCRB/QCR7, UQCRQ/QCR8, UQCR10/QCR9, UQCR11/QCR10 and a cleavage product of UQCRFS1). This cytochrome bc1 complex then forms a dimer. The cofactor is heme b.

It localises to the mitochondrion inner membrane. Functionally, component of the ubiquinol-cytochrome c reductase complex (complex III or cytochrome b-c1 complex) that is part of the mitochondrial respiratory chain. The b-c1 complex mediates electron transfer from ubiquinol to cytochrome c. Contributes to the generation of a proton gradient across the mitochondrial membrane that is then used for ATP synthesis. This chain is Cytochrome b (MT-CYB), found in Dipodomys nelsoni (Nelson's kangaroo rat).